Here is a 705-residue protein sequence, read N- to C-terminus: Glycogen [starch] synthase isoform 2 (705 aa).

Arginine 20 is a UDP binding site. Serine 159 carries the post-translational modification Phosphoserine. 2 residues coordinate UDP-alpha-D-glucose: histidine 193 and arginine 199. 5 residues coordinate alpha-D-glucose 6-phosphate: histidine 280, glutamate 281, glutamine 283, histidine 286, and lysine 290. Residue arginine 320 participates in UDP binding. Arginine 320 provides a ligand contact to UDP-alpha-D-glucose. Serine 363 and serine 467 each carry phosphoserine. Histidine 500 contributes to the alpha-D-glucose 6-phosphate binding site. 3 residues coordinate UDP-alpha-D-glucose: glutamate 509, tryptophan 511, and glycine 512. Threonine 514 contacts UDP. The alpha-D-glucose 6-phosphate site is built by arginine 583 and arginine 587. Position 651 is a phosphoserine (serine 651). Serine 655 carries the phosphoserine; by PHO85 modification. Residues serine 661 and serine 663 each carry the phosphoserine; by PKA modification. Position 668 is a phosphothreonine; by PHO85 (threonine 668). The disordered stretch occupies residues serine 686–serine 705. The segment covering alanine 693 to serine 705 has biased composition (acidic residues).

The protein belongs to the glycosyltransferase 3 family. In terms of assembly, interacts with PCL10. Phosphorylated by the cyclin-CDK PCL10-PHO85. Phosphorylation causes inactivation of enzyme.

The protein localises to the cytoplasm. It localises to the cytosol. The catalysed reaction is [(1-&gt;4)-alpha-D-glucosyl](n) + UDP-alpha-D-glucose = [(1-&gt;4)-alpha-D-glucosyl](n+1) + UDP + H(+). It functions in the pathway glycan biosynthesis; glycogen biosynthesis. Its activity is regulated as follows. Allosteric activation by glucose-6-phosphate, and phosphorylation by a cAMP-dependent kinase. Functionally, glycogen synthase participates in the glycogen biosynthetic process along with glycogenin and glycogen branching enzyme. Extends the primer composed of a few glucose units formed by glycogenin by adding new glucose units to it. In this context, glycogen synthase transfers the glycosyl residue from UDP-Glc to the non-reducing end of alpha-1,4-glucan. The protein is Glycogen [starch] synthase isoform 2 (GSY2) of Saccharomyces cerevisiae (strain ATCC 204508 / S288c) (Baker's yeast).